Consider the following 63-residue polypeptide: MNFNKVFILVAIVIAIFAGQTEAGWLKKIGKKIERVGQHTRDATIQTIAVAQQAANVAATARG.

Positions 1 to 21 (MNFNKVFILVAIVIAIFAGQT) are cleaved as a signal peptide. A propeptide spanning residues 22–23 (EA) is cleaved from the precursor. Arg62 carries the post-translational modification Arginine amide.

This sequence belongs to the cecropin family.

The protein localises to the secreted. Cecropins have lytic and antibacterial activity against several Gram-positive and Gram-negative bacteria. The sequence is that of Cecropin-1 (CEC1) from Ceratitis capitata (Mediterranean fruit fly).